The sequence spans 317 residues: Beta-ketoacyl-[acyl-carrier-protein] synthase III (317 aa).

Active-site residues include Cys112 and His244. The ACP-binding stretch occupies residues 245-249; the sequence is QANLR. Residue Asn274 is part of the active site.

This sequence belongs to the thiolase-like superfamily. FabH family. Homodimer.

Its subcellular location is the cytoplasm. The catalysed reaction is malonyl-[ACP] + acetyl-CoA + H(+) = 3-oxobutanoyl-[ACP] + CO2 + CoA. It functions in the pathway lipid metabolism; fatty acid biosynthesis. Its function is as follows. Catalyzes the condensation reaction of fatty acid synthesis by the addition to an acyl acceptor of two carbons from malonyl-ACP. Catalyzes the first condensation reaction which initiates fatty acid synthesis and may therefore play a role in governing the total rate of fatty acid production. Possesses both acetoacetyl-ACP synthase and acetyl transacylase activities. Its substrate specificity determines the biosynthesis of branched-chain and/or straight-chain of fatty acids. This is Beta-ketoacyl-[acyl-carrier-protein] synthase III from Shigella sonnei (strain Ss046).